Consider the following 208-residue polypeptide: Guanylate kinase (208 aa).

A Guanylate kinase-like domain is found at 21–201 (GRVVVLSGPS…ACAELVSLLV (181 aa)). 28–35 (GPSAVGKS) is an ATP binding site.

The protein belongs to the guanylate kinase family.

It localises to the cytoplasm. The catalysed reaction is GMP + ATP = GDP + ADP. Functionally, essential for recycling GMP and indirectly, cGMP. This chain is Guanylate kinase (gmk), found in Mycobacterium bovis (strain ATCC BAA-935 / AF2122/97).